The primary structure comprises 211 residues: Uridine kinase (211 aa).

12–19 serves as a coordination point for ATP; sequence GGSGSGKT.

The protein belongs to the uridine kinase family.

It localises to the cytoplasm. The enzyme catalyses uridine + ATP = UMP + ADP + H(+). It catalyses the reaction cytidine + ATP = CMP + ADP + H(+). The protein operates within pyrimidine metabolism; CTP biosynthesis via salvage pathway; CTP from cytidine: step 1/3. It functions in the pathway pyrimidine metabolism; UMP biosynthesis via salvage pathway; UMP from uridine: step 1/1. This is Uridine kinase from Bacillus velezensis (strain DSM 23117 / BGSC 10A6 / LMG 26770 / FZB42) (Bacillus amyloliquefaciens subsp. plantarum).